Here is a 490-residue protein sequence, read N- to C-terminus: Bifunctional protein HldE (490 aa).

The ribokinase stretch occupies residues 1–330 (MERKNVESLF…GSLGFQHGEG (330 aa)). 205–208 (NRKE) contacts ATP. Asp-275 is an active-site residue. The segment at 356 to 490 (FTNGCFDLLH…EKILKAYGEE (135 aa)) is cytidylyltransferase.

The protein in the N-terminal section; belongs to the carbohydrate kinase PfkB family. This sequence in the C-terminal section; belongs to the cytidylyltransferase family. In terms of assembly, homodimer.

It catalyses the reaction D-glycero-beta-D-manno-heptose 7-phosphate + ATP = D-glycero-beta-D-manno-heptose 1,7-bisphosphate + ADP + H(+). It carries out the reaction D-glycero-beta-D-manno-heptose 1-phosphate + ATP + H(+) = ADP-D-glycero-beta-D-manno-heptose + diphosphate. Its pathway is nucleotide-sugar biosynthesis; ADP-L-glycero-beta-D-manno-heptose biosynthesis; ADP-L-glycero-beta-D-manno-heptose from D-glycero-beta-D-manno-heptose 7-phosphate: step 1/4. The protein operates within nucleotide-sugar biosynthesis; ADP-L-glycero-beta-D-manno-heptose biosynthesis; ADP-L-glycero-beta-D-manno-heptose from D-glycero-beta-D-manno-heptose 7-phosphate: step 3/4. In terms of biological role, catalyzes the phosphorylation of D-glycero-D-manno-heptose 7-phosphate at the C-1 position to selectively form D-glycero-beta-D-manno-heptose-1,7-bisphosphate. Its function is as follows. Catalyzes the ADP transfer from ATP to D-glycero-beta-D-manno-heptose 1-phosphate, yielding ADP-D-glycero-beta-D-manno-heptose. The protein is Bifunctional protein HldE of Geobacter sulfurreducens (strain ATCC 51573 / DSM 12127 / PCA).